Consider the following 1758-residue polypeptide: Collagen alpha-2(IV) chain (1758 aa).

Residues 1–26 (MKQRAALGPVLRLAILALLAVSYVQS) form the signal peptide. Residues 27–42 (QATCRDCSNRGCFCVG) form a 7S domain region. Residues 42–1527 (GEKGSMGAPG…PGAPGAAGPA (1486 aa)) are triple-helical region. Positions 47 to 62 (MGAPGPQGPPGTQGIR) are enriched in low complexity. 4 disordered regions span residues 47–943 (MGAP…GAPG), 955–1304 (GVPG…GLPG), 1316–1339 (GFPG…DGLP), and 1367–1525 (GFPG…GAAG). Over residues 102–111 (GNDGGNGRPG) the composition is skewed to gly residues. Residues 134 to 149 (PGRPGPPGMPGFPGPP) are compositionally biased toward pro residues. The segment covering 189-198 (YPGEKGDRGD) has biased composition (basic and acidic residues). Positions 224 to 234 (PKGDPGDLGSV) are enriched in low complexity. An O-linked (Xyl...) (glycosaminoglycan) serine glycan is attached at S248. Residues 258–267 (PGEKGDKGEP) show a composition bias toward basic and acidic residues. Positions 268 to 283 (GEGGQRGYPGNGGLSG) are enriched in gly residues. Positions 367-382 (PGPPGLPGRPGNPGPP) are enriched in pro residues. Over residues 398–407 (GNTGGPGLPG) the composition is skewed to gly residues. Composition is skewed to low complexity over residues 408–417 (YPGNEGLPGP) and 429–439 (APGVSGPSGIP). A compositionally biased stretch (basic and acidic residues) spans 464-479 (KDGKPGLDGAPGRKGE). 2 stretches are compositionally biased toward low complexity: residues 495–509 (GLPG…PGPN) and 568–584 (PVGD…AGRP). Over residues 638-648 (PSGPVGPPGAP) the composition is skewed to pro residues. Composition is skewed to gly residues over residues 693 to 702 (GAKGDGGLPG), 737 to 746 (GTKGEGGYPG), and 782 to 791 (GDKGFGGVPG). Low complexity predominate over residues 839–858 (LPGLPGTPGLEGQRGFPGAP). The segment covering 859-868 (GLKGGDGLPG) has biased composition (gly residues). A compositionally biased stretch (low complexity) spans 929–938 (APGQSGAPGL). The segment covering 958–967 (GFKGDGGLPG) has biased composition (gly residues). Over residues 968 to 980 (LPGLNGPKGEPGV) the composition is skewed to low complexity. Positions 988 to 997 (GMKGNGGLPG) are enriched in gly residues. Residues 1040 to 1056 (LPGQPGLRGPQGPSGLP) show a composition bias toward low complexity. Residues 1194-1203 (GLPGLGGEKG) show a composition bias toward gly residues. A compositionally biased stretch (low complexity) spans 1237–1250 (FPGQPGQEGLPGLS). Residues 1251–1260 (GEKGMGGLPG) show a composition bias toward gly residues. Residues 1373–1382 (GLKGEGGLPG) are compositionally biased toward gly residues. Low complexity-rich tracts occupy residues 1413–1425 (LPGR…ADGP) and 1433–1454 (GPQN…APGL). Composition is skewed to gly residues over residues 1492 to 1501 (GEKGMGGLPG) and 1507 to 1516 (GQPGGPGAPG). The 224-residue stretch at 1531 to 1754 (GFVLVKHSQT…SRCQVCVKST (224 aa)) folds into the Collagen IV NC1 domain. 6 disulfides stabilise this stretch: C1546–C1635, C1579–C1632, C1591–C1597, C1654–C1750, C1688–C1747, and C1700–C1707.

It belongs to the type IV collagen family. In terms of assembly, trimers of two alpha 1(IV) and one alpha 2(IV) chain. Type IV collagen forms a mesh-like network linked through intermolecular interactions between 7S domains and between NC1 domains. Prolines at the third position of the tripeptide repeating unit (G-X-Y) are hydroxylated in some or all of the chains. In terms of processing, type IV collagens contain numerous cysteine residues which are involved in inter- and intramolecular disulfide bonding. 12 of these, located in the NC1 domain, are conserved in all known type IV collagens. Post-translationally, the trimeric structure of the NC1 domains is stabilized by covalent bonds between Lys and Met residues. In terms of tissue distribution, localizes to the basement membrane between distal tip cells and the germline. Localizes to the intestinal basement membrane.

The protein resides in the secreted. It is found in the extracellular space. Its subcellular location is the extracellular matrix. The protein localises to the basement membrane. In terms of biological role, collagen type IV is specific for basement membranes. Together with fbl-1 and downstream of metalloprotease mig-17, recruits nidogen nid-1 to the gonad basement membrane thereby probably inducing basement membrane remodeling required for the directional migration of distal tip cells. Required to restrict presynaptic growth at the neuromuscular junctions in late larval stage and in adult motor neurons. Vital for embryonic development. The sequence is that of Collagen alpha-2(IV) chain from Caenorhabditis elegans.